We begin with the raw amino-acid sequence, 295 residues long: MEIRRRPPNPSIKVANLEYAIPHPDSKPKNILEEIVWEKHLEVEIARKKVSLEDLKKKIKDLPKTKNFIDALRNSNSKPALISEIKKASPSRGIIREDFDAKMIGKMYQEGGANCISVLTDKKFFQGGFDVLVEVRKEIIIPILCKDFILYPYQLYQARAAGADAALLIAAILTDSDLKYLSKVAEHLGLTILVEVHDSEELERVLNINVFNLIGINNRNLKSFKTDLEVTKKLAENYANQIKENSITLVSESGLFNREDLDLVKSYGADAVLVGESLMSQEDILGGVKKLIGNL.

It belongs to the TrpC family.

It catalyses the reaction 1-(2-carboxyphenylamino)-1-deoxy-D-ribulose 5-phosphate + H(+) = (1S,2R)-1-C-(indol-3-yl)glycerol 3-phosphate + CO2 + H2O. The protein operates within amino-acid biosynthesis; L-tryptophan biosynthesis; L-tryptophan from chorismate: step 4/5. This is Indole-3-glycerol phosphate synthase from Prochlorococcus marinus (strain NATL2A).